Consider the following 321-residue polypeptide: Polyamine aminopropyltransferase (321 aa).

Residues 23–256 (HLLYLEHAGP…DEWSFSFGSD (234 aa)) enclose the PABS domain. Residue Gln-53 coordinates S-methyl-5'-thioadenosine. Residues His-84 and Asp-108 each coordinate spermidine. Residues Glu-127 and 159–160 (DG) each bind S-methyl-5'-thioadenosine. Asp-177 (proton acceptor) is an active-site residue.

This sequence belongs to the spermidine/spermine synthase family. In terms of assembly, homodimer or homotetramer.

It is found in the cytoplasm. The catalysed reaction is S-adenosyl 3-(methylsulfanyl)propylamine + putrescine = S-methyl-5'-thioadenosine + spermidine + H(+). The protein operates within amine and polyamine biosynthesis; spermidine biosynthesis; spermidine from putrescine: step 1/1. Functionally, catalyzes the irreversible transfer of a propylamine group from the amino donor S-adenosylmethioninamine (decarboxy-AdoMet) to putrescine (1,4-diaminobutane) to yield spermidine. This chain is Polyamine aminopropyltransferase, found in Korarchaeum cryptofilum (strain OPF8).